The chain runs to 299 residues: Phosphoribosylaminoimidazole-succinocarboxamide synthase (299 aa).

This sequence belongs to the SAICAR synthetase family.

The catalysed reaction is 5-amino-1-(5-phospho-D-ribosyl)imidazole-4-carboxylate + L-aspartate + ATP = (2S)-2-[5-amino-1-(5-phospho-beta-D-ribosyl)imidazole-4-carboxamido]succinate + ADP + phosphate + 2 H(+). It functions in the pathway purine metabolism; IMP biosynthesis via de novo pathway; 5-amino-1-(5-phospho-D-ribosyl)imidazole-4-carboxamide from 5-amino-1-(5-phospho-D-ribosyl)imidazole-4-carboxylate: step 1/2. This Maridesulfovibrio salexigens (strain ATCC 14822 / DSM 2638 / NCIMB 8403 / VKM B-1763) (Desulfovibrio salexigens) protein is Phosphoribosylaminoimidazole-succinocarboxamide synthase.